We begin with the raw amino-acid sequence, 120 residues long: Small ribosomal subunit protein bS6 (120 aa).

Polar residues predominate over residues 97–112 (SNEPSPILKNQSTENT). A disordered region spans residues 97-120 (SNEPSPILKNQSTENTPVIDVTAN).

The protein belongs to the bacterial ribosomal protein bS6 family.

Functionally, binds together with bS18 to 16S ribosomal RNA. This chain is Small ribosomal subunit protein bS6, found in Rickettsia bellii (strain OSU 85-389).